The following is a 64-amino-acid chain: Large ribosomal subunit protein uL29 (64 aa).

This sequence belongs to the universal ribosomal protein uL29 family.

The protein is Large ribosomal subunit protein uL29 of Solidesulfovibrio magneticus (strain ATCC 700980 / DSM 13731 / RS-1) (Desulfovibrio magneticus).